A 150-amino-acid chain; its full sequence is Endoribonuclease YbeY (150 aa).

Residues histidine 102, histidine 106, and histidine 112 each coordinate Zn(2+).

This sequence belongs to the endoribonuclease YbeY family. Zn(2+) serves as cofactor.

The protein localises to the cytoplasm. Single strand-specific metallo-endoribonuclease involved in late-stage 70S ribosome quality control and in maturation of the 3' terminus of the 16S rRNA. The protein is Endoribonuclease YbeY of Thermotoga sp. (strain RQ2).